Reading from the N-terminus, the 208-residue chain is MVLVKICGVVRVEDAVLLDGVADYIGFIVEPTSPRSVKPEALRSLRDAVIKSRPVLVTATIPPKEAVDIAAKNEIPVVQYHSTLAPKDFDYAETRGVTLAPVAVYKPGIELKQLVEELLKTPHEYVLVDADKKSQERYEGGLKIPLTLLAEVAPLGRVALAGGITPENAQLIARLNPYMIDVASGVEASPGVKDMNKVKALLKAVGRL.

This sequence belongs to the TrpF family.

It carries out the reaction N-(5-phospho-beta-D-ribosyl)anthranilate = 1-(2-carboxyphenylamino)-1-deoxy-D-ribulose 5-phosphate. Its pathway is amino-acid biosynthesis; L-tryptophan biosynthesis; L-tryptophan from chorismate: step 3/5. The chain is N-(5'-phosphoribosyl)anthranilate isomerase (trpF) from Pyrobaculum aerophilum (strain ATCC 51768 / DSM 7523 / JCM 9630 / CIP 104966 / NBRC 100827 / IM2).